We begin with the raw amino-acid sequence, 350 residues long: Dihydroorotate dehydrogenase (quinone) (350 aa).

FMN-binding positions include 67-71 (AGFDK) and glycine 91. Lysine 71 provides a ligand contact to substrate. 116-120 (NRMGF) lines the substrate pocket. Residues asparagine 144 and asparagine 177 each coordinate FMN. Asparagine 177 serves as a coordination point for substrate. The active-site Nucleophile is serine 180. Substrate is bound at residue asparagine 182. Residues lysine 213 and threonine 241 each contribute to the FMN site. Residue 242 to 243 (NT) participates in substrate binding. The segment at 249-268 (ASLHSDAADEEGGLSGAPIT) is disordered. Residues glycine 264, glycine 291, and 312 to 313 (YT) each bind FMN.

It belongs to the dihydroorotate dehydrogenase family. Type 2 subfamily. As to quaternary structure, monomer. The cofactor is FMN.

It localises to the cell membrane. The enzyme catalyses (S)-dihydroorotate + a quinone = orotate + a quinol. The protein operates within pyrimidine metabolism; UMP biosynthesis via de novo pathway; orotate from (S)-dihydroorotate (quinone route): step 1/1. Functionally, catalyzes the conversion of dihydroorotate to orotate with quinone as electron acceptor. The chain is Dihydroorotate dehydrogenase (quinone) from Natronomonas pharaonis (strain ATCC 35678 / DSM 2160 / CIP 103997 / JCM 8858 / NBRC 14720 / NCIMB 2260 / Gabara) (Halobacterium pharaonis).